The chain runs to 317 residues: Ferrochelatase (317 aa).

Positions 191 and 271 each coordinate Fe cation.

Belongs to the ferrochelatase family.

The protein resides in the cytoplasm. It carries out the reaction heme b + 2 H(+) = protoporphyrin IX + Fe(2+). It functions in the pathway porphyrin-containing compound metabolism; protoheme biosynthesis; protoheme from protoporphyrin-IX: step 1/1. Functionally, catalyzes the ferrous insertion into protoporphyrin IX. The sequence is that of Ferrochelatase from Thermus thermophilus (strain ATCC BAA-163 / DSM 7039 / HB27).